The sequence spans 689 residues: Methionine--tRNA ligase (689 aa).

The 'HIGH' region signature appears at 15–25 (PYANGPIHLGH). Zn(2+) contacts are provided by cysteine 146, cysteine 149, cysteine 159, and cysteine 162. The 'KMSKS' region signature appears at 332-336 (KMSKS). Lysine 335 provides a ligand contact to ATP. Positions 588-689 (DFAKIDLRIA…EGAQPGMRVK (102 aa)) constitute a tRNA-binding domain.

Belongs to the class-I aminoacyl-tRNA synthetase family. MetG type 1 subfamily. As to quaternary structure, homodimer. It depends on Zn(2+) as a cofactor.

It is found in the cytoplasm. The enzyme catalyses tRNA(Met) + L-methionine + ATP = L-methionyl-tRNA(Met) + AMP + diphosphate. Its function is as follows. Is required not only for elongation of protein synthesis but also for the initiation of all mRNA translation through initiator tRNA(fMet) aminoacylation. In Shewanella baltica (strain OS223), this protein is Methionine--tRNA ligase.